A 26-amino-acid polypeptide reads, in one-letter code: Beta-hexosaminidase (26 aa).

Glycosylated. Detected in dry seeds and cotyledons.

It carries out the reaction Hydrolysis of terminal non-reducing N-acetyl-D-hexosamine residues in N-acetyl-beta-D-hexosaminides.. Inhibited by AgNO(3) at a concentration of 0.1 mM. Strongly inhibited by CdCl(2), ZnCl(2) and FeCl(3) and moderately by CoCl(2), CuSO(4) and NiCl(2) at 10 mM concentration. CaCl(2), MgCl(2), MnSO(4) and KI also have a slight inhibitory effect of 20%-25% at 10 mM concentration. Activated to a small extent by MgCl(2) at 0.1 mM concentration but inhibited with increasing concentration. Not affected by carbohydrates such as fucose, galactose and glucose but displays a slight decrease in activity up to 25% with lactose, alpha-mannose and N-acetyl-galactosamine (GalNAc). In terms of biological role, has hexosaminidase activity. Active with both p-nitrophenyl-beta-D-N-acetylglucosamine (pNP-GlcNAc) and p-nitrophenyl-beta-D-N-acetylgalactosamine (pNP-GalNAc). Not active toward p-nitrophenyl-beta-D-N,N'-diacetylchitobiose (pNP-(GlcNAc)2) or p-nitrophenyl-beta-D-N,N',N''-triacetylchitobiose (pNP-(GlcNAc)3). Removes terminal GlcNAc and may be involved in storage protein degradation. The sequence is that of Beta-hexosaminidase from Lupinus albus (White lupine).